Reading from the N-terminus, the 398-residue chain is Subtilisin-like serine protease EN45_076310 (398 aa).

Positions 1 to 19 are cleaved as a signal peptide; it reads MGFLKLLSTSLATLAVVNA. The propeptide at 20-115 is removed in mature form; it reads GKLLTANDGD…VEPDMVVNAT (96 aa). Residues 35–113 form the Inhibitor I9 domain; the sequence is SYIVVMNDGV…KYVEPDMVVN (79 aa). A glycan (N-linked (GlcNAc...) asparagine) is linked at Asn113. The tract at residues 124-134 is igE-binding; the sequence is PSWGLSRISSK. Positions 125-398 constitute a Peptidase S8 domain; sequence SWGLSRISSK…KLLYNGINAQ (274 aa). Asp157 functions as the Charge relay system in the catalytic mechanism. An igE-binding region spans residues 163–170; that stretch reads GHADFGGR. Positions 175 to 195 are disordered; it reads TNTADNDDTDGNGHGTHTAST. The Charge relay system role is filled by His188. The igE-binding stretch occupies residues 227 to 245; that stretch reads IAGMDWAVKDSKSRGATGK. N-linked (GlcNAc...) asparagine glycosylation is present at Asn249. The segment at 310–318 is igE-binding; sequence SFTNFGSVV. Catalysis depends on Ser343, which acts as the Charge relay system.

This sequence belongs to the peptidase S8 family.

The protein resides in the secreted. With respect to regulation, inhibited by phenylmethanesulfonyl fluoride (PMSF) and diethyl pyrocarbonate (DEPC), but not by benzamidine. Functionally, serine protease that hydrolyzes casein, gelatin and human collagen type IV, but not elastin in vitro. Hydrolyzes OCLN of the human lung epithelial cells at 202-Gln-|-Ser-203 and Gln-211-|-Ile-212. In Penicillium chrysogenum (Penicillium notatum), this protein is Subtilisin-like serine protease EN45_076310.